The primary structure comprises 493 residues: 3-octaprenyl-4-hydroxybenzoate carboxy-lyase (493 aa).

N172 serves as a coordination point for Mn(2+). Residues 175–177, 189–191, and 194–195 each bind prenylated FMN; these read IYR, RWL, and RG. Residue E238 participates in Mn(2+) binding. D287 acts as the Proton donor in catalysis.

It belongs to the UbiD family. In terms of assembly, homohexamer. Prenylated FMN is required as a cofactor. The cofactor is Mn(2+).

The protein resides in the cell membrane. The catalysed reaction is a 4-hydroxy-3-(all-trans-polyprenyl)benzoate + H(+) = a 2-(all-trans-polyprenyl)phenol + CO2. The protein operates within cofactor biosynthesis; ubiquinone biosynthesis. Its function is as follows. Catalyzes the decarboxylation of 3-octaprenyl-4-hydroxy benzoate to 2-octaprenylphenol, an intermediate step in ubiquinone biosynthesis. This chain is 3-octaprenyl-4-hydroxybenzoate carboxy-lyase, found in Shewanella halifaxensis (strain HAW-EB4).